The sequence spans 329 residues: Peroxidase 18 (329 aa).

An N-terminal signal peptide occupies residues 1–29; it reads MALQFFSCKPKYTFLSSLLLLLLLSSSVA. 4 disulfide bridges follow: Cys-40/Cys-116, Cys-73/Cys-78, Cys-122/Cys-325, and Cys-201/Cys-235. The active-site Proton acceptor is the His-71. Residues Asp-72, Val-75, Gly-77, Asp-79, and Ser-81 each contribute to the Ca(2+) site. An N-linked (GlcNAc...) asparagine glycan is attached at Asn-87. Residue Ile-164 coordinates substrate. His-194 serves as a coordination point for heme b. Thr-195 serves as a coordination point for Ca(2+). Residues Asp-249, Thr-252, and Asp-257 each contribute to the Ca(2+) site.

Belongs to the peroxidase family. Classical plant (class III) peroxidase subfamily. It depends on heme b as a cofactor. Requires Ca(2+) as cofactor.

The protein resides in the secreted. It catalyses the reaction 2 a phenolic donor + H2O2 = 2 a phenolic radical donor + 2 H2O. Its function is as follows. Removal of H(2)O(2), oxidation of toxic reductants, biosynthesis and degradation of lignin, suberization, auxin catabolism, response to environmental stresses such as wounding, pathogen attack and oxidative stress. These functions might be dependent on each isozyme/isoform in each plant tissue. The protein is Peroxidase 18 (PER18) of Arabidopsis thaliana (Mouse-ear cress).